Consider the following 862-residue polypeptide: Putative PIP5K1A and PSMD4-like protein (862 aa).

One can recognise a PIPK domain in the interval 28 to 396 (TSSALKGAIQ…WFQRFMCNTV (369 aa)). Disordered regions lie at residues 404–424 (PSPSKKLRSGSSFSQRAGSSG) and 453–481 (HLGCPDVLPQTPPLEEISEGSPTPDPSFS). Low complexity predominate over residues 412–424 (SGSSFSQRAGSSG). The region spanning 490–673 (MLTTSVDNSE…LADALISFPI (184 aa)) is the VWFA domain. In terms of domain architecture, UIM 1 spans 696–715 (SADPELALVLRVFMEEQRQR). The segment at 716–740 (QEEEARQAAAASAAEAGIATTGTED) is disordered. Residues 722 to 731 (QAAAASAAEA) show a composition bias toward low complexity. Residues 766–783 (MTEEEKIVCAMQMSLQGA) form the UIM 2 domain. Residues 826-862 (NLPGVDPNNEAIRNAVGSLASQATKDSKKDKKEEDKK) are disordered. Residues 850-862 (KDSKKDKKEEDKK) show a composition bias toward basic and acidic residues.

As to expression, testis-specific.

It localises to the cytoplasm. Its function is as follows. Has negligible PIP5 kinase activity. Binds to ubiquitinated proteins. The chain is Putative PIP5K1A and PSMD4-like protein (PIPSL) from Homo sapiens (Human).